The primary structure comprises 584 residues: Proteasome-associated ATPase (584 aa).

A coiled-coil region spans residues 8-90 (RHAERDRDEL…KEEVDRLSQP (83 aa)). 272-277 (GCGKTL) is a binding site for ATP. A docks into pockets in the proteasome alpha-ring region spans residues 583–584 (YL).

The protein belongs to the AAA ATPase family. Homohexamer. Assembles into a hexameric ring structure that caps the 20S proteasome core. Strongly interacts with the prokaryotic ubiquitin-like protein Pup through a hydrophobic interface; the interacting region of ARC lies in its N-terminal coiled-coil domain. There is one Pup binding site per ARC hexamer ring. Upon ATP-binding, the C-terminus of ARC interacts with the alpha-rings of the proteasome core, possibly by binding to the intersubunit pockets.

It participates in protein degradation; proteasomal Pup-dependent pathway. Functionally, ATPase which is responsible for recognizing, binding, unfolding and translocation of pupylated proteins into the bacterial 20S proteasome core particle. May be essential for opening the gate of the 20S proteasome via an interaction with its C-terminus, thereby allowing substrate entry and access to the site of proteolysis. Thus, the C-termini of the proteasomal ATPase may function like a 'key in a lock' to induce gate opening and therefore regulate proteolysis. This Thermobifida fusca (strain YX) protein is Proteasome-associated ATPase.